The chain runs to 145 residues: 3-hydroxyacyl-[acyl-carrier-protein] dehydratase FabZ (145 aa).

Residue His-51 is part of the active site.

This sequence belongs to the thioester dehydratase family. FabZ subfamily.

The protein localises to the cytoplasm. The enzyme catalyses a (3R)-hydroxyacyl-[ACP] = a (2E)-enoyl-[ACP] + H2O. Its function is as follows. Involved in unsaturated fatty acids biosynthesis. Catalyzes the dehydration of short chain beta-hydroxyacyl-ACPs and long chain saturated and unsaturated beta-hydroxyacyl-ACPs. The chain is 3-hydroxyacyl-[acyl-carrier-protein] dehydratase FabZ from Staphylococcus carnosus (strain TM300).